The chain runs to 491 residues: Myocilin (491 aa).

An N-terminal signal peptide occupies residues 1–18 (MPAVQLLLLACPVWDVGA). N-linked (GlcNAc...) asparagine glycosylation occurs at Asn-43. A coiled-coil region spans residues 98-171 (QETPEGLQRE…QEVARLRRGQ (74 aa)). Residues 151–189 (ENLARRLESSSQEVARLRRGQCPQTRDTARDVPPGSREV) form a disordered region. One can recognise an Olfactomedin-like domain in the interval 231-490 (GCGELVWVGE…MVTYDIKLSK (260 aa)). Residues Cys-232 and Cys-420 are joined by a disulfide bond. Ca(2+) is bound by residues Asp-367, Asn-415, Ala-416, Ile-464, and Asp-465.

In terms of assembly, homodimer (via N-terminus). Can also form higher oligomers. Interacts with OLFM3, FN1, NRCAM, GLDN and NFASC. Interacts (via N-terminus) with MYL2. Interacts with SFRP1, FRZB, FZD7, FZD10, FZD1 and WIF1; regulates Wnt signaling. Interacts with SNTA1; regulates muscle hypertrophy. Interacts with ERBB2 and ERBB3; activates ERBB2-ERBB3 signaling pathway. Interacts with SNCG; affects its secretion and its aggregation. In terms of processing, palmitoylated. Post-translationally, undergoes a calcium-dependent proteolytic cleavage at Arg-213 by CAPN2 in the endoplasmic reticulum. The result is the production of two fragments, one of 35 kDa containing the C-terminal olfactomedin-like domain, and another of 20 kDa containing the N-terminal leucine zipper-like domain. Glycosylated.

It is found in the secreted. The protein resides in the golgi apparatus. It localises to the cytoplasmic vesicle. Its subcellular location is the extracellular space. The protein localises to the extracellular matrix. It is found in the extracellular exosome. The protein resides in the mitochondrion. It localises to the mitochondrion intermembrane space. Its subcellular location is the mitochondrion inner membrane. The protein localises to the mitochondrion outer membrane. It is found in the rough endoplasmic reticulum. The protein resides in the cell projection. It localises to the cilium. Its subcellular location is the endoplasmic reticulum. Functionally, secreted glycoprotein regulating the activation of different signaling pathways in adjacent cells to control different processes including cell adhesion, cell-matrix adhesion, cytoskeleton organization and cell migration. Promotes substrate adhesion, spreading and formation of focal contacts. Negatively regulates cell-matrix adhesion and stress fiber assembly through Rho protein signal transduction. Modulates the organization of actin cytoskeleton by stimulating the formation of stress fibers through interactions with components of Wnt signaling pathways. Promotes cell migration through activation of PTK2 and the downstream phosphatidylinositol 3-kinase signaling. Plays a role in bone formation and promotes osteoblast differentiation in a dose-dependent manner through mitogen-activated protein kinase signaling. Mediates myelination in the peripheral nervous system through ERBB2/ERBB3 signaling. Plays a role as a regulator of muscle hypertrophy through the components of dystrophin-associated protein complex. Involved in positive regulation of mitochondrial depolarization. Plays a role in neurite outgrowth. May participate in the obstruction of fluid outflow in the trabecular meshwork. This Macaca fascicularis (Crab-eating macaque) protein is Myocilin (MYOC).